A 542-amino-acid polypeptide reads, in one-letter code: Formate--tetrahydrofolate ligase (542 aa).

ATP is bound at residue 53 to 60 (TPAGEGKT).

It belongs to the formate--tetrahydrofolate ligase family.

It catalyses the reaction (6S)-5,6,7,8-tetrahydrofolate + formate + ATP = (6R)-10-formyltetrahydrofolate + ADP + phosphate. It participates in one-carbon metabolism; tetrahydrofolate interconversion. The chain is Formate--tetrahydrofolate ligase from Thermotoga maritima (strain ATCC 43589 / DSM 3109 / JCM 10099 / NBRC 100826 / MSB8).